The primary structure comprises 385 residues: 8-amino-7-oxononanoate synthase (385 aa).

Arg21 serves as a coordination point for substrate. Pyridoxal 5'-phosphate is bound at residue 108 to 109 (GF). His133 serves as a coordination point for substrate. Residues Ser179, His207, and Thr233 each contribute to the pyridoxal 5'-phosphate site. At Lys236 the chain carries N6-(pyridoxal phosphate)lysine. Thr352 contributes to the substrate binding site.

Belongs to the class-II pyridoxal-phosphate-dependent aminotransferase family. BioF subfamily. Homodimer. Pyridoxal 5'-phosphate is required as a cofactor.

It catalyses the reaction 6-carboxyhexanoyl-[ACP] + L-alanine + H(+) = (8S)-8-amino-7-oxononanoate + holo-[ACP] + CO2. Its pathway is cofactor biosynthesis; biotin biosynthesis. Functionally, catalyzes the decarboxylative condensation of pimeloyl-[acyl-carrier protein] and L-alanine to produce 8-amino-7-oxononanoate (AON), [acyl-carrier protein], and carbon dioxide. In Salmonella typhimurium (strain LT2 / SGSC1412 / ATCC 700720), this protein is 8-amino-7-oxononanoate synthase.